The chain runs to 610 residues: DNA mismatch repair protein MutL (610 aa).

Belongs to the DNA mismatch repair MutL/HexB family.

Functionally, this protein is involved in the repair of mismatches in DNA. It is required for dam-dependent methyl-directed DNA mismatch repair. May act as a 'molecular matchmaker', a protein that promotes the formation of a stable complex between two or more DNA-binding proteins in an ATP-dependent manner without itself being part of a final effector complex. This is DNA mismatch repair protein MutL from Rickettsia peacockii (strain Rustic).